The following is a 220-amino-acid chain: Ras-related protein Rab-3A (220 aa).

GTP-binding residues include Ser-31, Ser-32, Val-33, Gly-34, Lys-35, Thr-36, Ser-37, Thr-48, Pro-49, Ser-53, and Thr-54. Thr-36 is a binding site for Mg(2+). The short motif at 49-58 (PAFVSTVGID) is the Switch 1 element. The Mg(2+) site is built by Thr-54 and Asp-77. Gly-80 contributes to the GTP binding site. A Switch 2 motif is present at residues 80–96 (GQERYRTITTAYYRGAM). Thr-86 is subject to Phosphothreonine. GTP is bound by residues Asn-135, Lys-136, Asp-138, Ala-166, and Lys-167. Residues Ser-188 and Ser-190 each carry the phosphoserine modification. Positions 194–220 (ADPAVTGAKQGPQLTDQQAPPHQDCAC) are disordered. S-geranylgeranyl cysteine attachment occurs at residues Cys-218 and Cys-220. Residue Cys-220 is modified to Cysteine methyl ester.

The protein belongs to the small GTPase superfamily. Rab family. Interacts with RIMS1 and RIMS2. Interacts with Rabphilin-3A/RPH3A and Rab effector Noc2/RPH3AL. Interacts with SYTL4. Interacts with RAB3IP. Interacts with SGSM1 and SGSM3. Interacts with SYT1. Interacts with MYH9; this interaction is essential for lysosome exocytosis and plasma membrane repair. Interacts with STXBP1; this interaction promotes RAB3A dissociation from the vesicle membrane. Interacts with SNCA. Interacts with GDI1, GDI2, CHM and CHML; phosphorylation at Thr-86 disrupts these interactions. Interacts with MADD (via uDENN domain); the GTP-bound form is preferred for interaction. Requires Mg(2+) as cofactor. Post-translationally, phosphorylation of Thr-86 in the switch II region by LRRK2 prevents the association of RAB regulatory proteins, including CHM, CHML and RAB GDP dissociation inhibitors GDI1 and GDI2.

Its subcellular location is the cytoplasm. It is found in the cytosol. The protein resides in the lysosome. It localises to the cytoplasmic vesicle. The protein localises to the secretory vesicle. Its subcellular location is the cell projection. It is found in the axon. The protein resides in the cell membrane. It localises to the presynapse. The protein localises to the postsynapse. It catalyses the reaction GTP + H2O = GDP + phosphate + H(+). With respect to regulation, regulated by guanine nucleotide exchange factors (GEFs) including RAB3IL1 and MADD which promote the exchange of bound GDP for free GTP. Regulated by GTPase activating proteins (GAPs) including RAB3GAP1 and TBC1D10B which increase the GTP hydrolysis activity. Inhibited by GDP dissociation inhibitors (GDIs) which prevent Rab-GDP dissociation. Its function is as follows. The small GTPases Rab are key regulators of intracellular membrane trafficking, from the formation of transport vesicles to their fusion with membranes. Rabs cycle between an inactive GDP-bound form and an active GTP-bound form that is able to recruit to membranes different sets of downstream effectors directly responsible for vesicle formation, movement, tethering and fusion. RAB3A plays a central role in regulated exocytosis and secretion. Controls the recruitment, tethering and docking of secretory vesicles to the plasma membrane. Upon stimulation, switches to its active GTP-bound form, cycles to vesicles and recruits effectors such as RIMS1, RIMS2, Rabphilin-3A/RPH3A, RPH3AL or SYTL4 to help the docking of vesicules onto the plasma membrane. Upon GTP hydrolysis by GTPase-activating protein, dissociates from the vesicle membrane allowing the exocytosis to proceed. Stimulates insulin secretion through interaction with RIMS2 or RPH3AL effectors in pancreatic beta cells. Regulates calcium-dependent lysosome exocytosis and plasma membrane repair (PMR) via the interaction with 2 effectors, SYTL4 and myosin-9/MYH9. Acts as a positive regulator of acrosome content secretion in sperm cells by interacting with RIMS1. Also plays a role in the regulation of dopamine release by interacting with synaptotagmin I/SYT. This is Ras-related protein Rab-3A (RAB3A) from Sus scrofa (Pig).